The chain runs to 270 residues: G-box-binding factor 4 (270 aa).

Positions 1-46 (MASFKLMSSSNSDLSRRNSSSASSSPSIRSSHHLRPNPHADHSRIS) are disordered. The span at 8-29 (SSSNSDLSRRNSSSASSSPSIR) shows a compositional bias: low complexity. Residue S27 is modified to Phosphoserine. Positions 187–250 (AAQRQKRMIK…YKKLMEVLIP (64 aa)) constitute a bZIP domain. The basic motif stretch occupies residues 190-208 (RQKRMIKNRESAARSRERK). The segment at 215-229 (LETLAAKLEEENEQL) is leucine-zipper. The disordered stretch occupies residues 250–270 (PVDEKPRPPSRPLSRSHSLEW). Low complexity predominate over residues 261-270 (PLSRSHSLEW).

Belongs to the bZIP family. As to quaternary structure, DNA-binding heterodimer with GBF2 and GBF3; non DNA-binding homodimer.

Its subcellular location is the nucleus. In terms of biological role, binds to the G-box motif (5'-CCACGTGG-3') of the rbcS-1A gene promoter. G-box and G-box-like motifs are cis-acting elements defined in promoters of certain plant genes which are regulated by such diverse stimuli as light-induction or hormone control. This Arabidopsis thaliana (Mouse-ear cress) protein is G-box-binding factor 4 (GBF4).